The sequence spans 660 residues: Methionine--tRNA ligase (660 aa).

The short motif at 11–21 (PYANGPCHLGH) is the 'HIGH' region element. Cys-143, Cys-146, Cys-155, and Cys-158 together coordinate Zn(2+). The short motif at 325–329 (KMSTS) is the 'KMSKS' region element. Position 328 (Thr-328) interacts with ATP. The region spanning 563–660 (DFDKVVIKIG…DECEVGERIQ (98 aa)) is the tRNA-binding domain.

The protein belongs to the class-I aminoacyl-tRNA synthetase family. MetG type 1 subfamily. As to quaternary structure, homodimer. Requires Zn(2+) as cofactor.

It is found in the cytoplasm. The catalysed reaction is tRNA(Met) + L-methionine + ATP = L-methionyl-tRNA(Met) + AMP + diphosphate. Functionally, is required not only for elongation of protein synthesis but also for the initiation of all mRNA translation through initiator tRNA(fMet) aminoacylation. The sequence is that of Methionine--tRNA ligase from Methanobrevibacter smithii (strain ATCC 35061 / DSM 861 / OCM 144 / PS).